We begin with the raw amino-acid sequence, 185 residues long: MISVNDFYPGLTIELEGEIYIVLEYQHVHMAQGQATVRVKLKNLKTGNVIRKTFKSDEYVPQAFINKREAEYLYKQGDEYYFIDNESFEQYILTEEQLGDAIKYLKEGNTVSVLFYEGNPIGIELPTTVVLEVVETDPGLRGDTVSGGSKPAKLETGLVIQVPLFIQIGDKVVVDTRYAKYVERA.

It belongs to the elongation factor P family.

The protein resides in the cytoplasm. It participates in protein biosynthesis; polypeptide chain elongation. In terms of biological role, involved in peptide bond synthesis. Stimulates efficient translation and peptide-bond synthesis on native or reconstituted 70S ribosomes in vitro. Probably functions indirectly by altering the affinity of the ribosome for aminoacyl-tRNA, thus increasing their reactivity as acceptors for peptidyl transferase. This Dictyoglomus turgidum (strain DSM 6724 / Z-1310) protein is Elongation factor P.